A 145-amino-acid chain; its full sequence is Ribosome maturation factor RimP (145 aa).

Belongs to the RimP family.

It localises to the cytoplasm. Functionally, required for maturation of 30S ribosomal subunits. The protein is Ribosome maturation factor RimP of Azotobacter vinelandii (strain DJ / ATCC BAA-1303).